A 258-amino-acid polypeptide reads, in one-letter code: Axonemal dynein light intermediate polypeptide 1 (258 aa).

Disordered regions lie at residues Met-1 to Asp-60 and Asp-202 to Lys-231. The stretch at Met-176–Ala-255 forms a coiled coil.

This sequence belongs to the inner dynein arm light chain family. As to quaternary structure, interacts with CFAP45. Interacts with DYNC1H1. As to expression, predominantly expressed in the testis, also detected at lower levels in several tissues expressing cilia. Strongly expressed in elongating spermatid cells (at protein level).

It localises to the cell projection. The protein resides in the cilium. It is found in the flagellum. Its subcellular location is the dynein axonemal particle. The protein localises to the cytoplasm. In terms of biological role, involved in sperm flagellum assembly. This Mus musculus (Mouse) protein is Axonemal dynein light intermediate polypeptide 1.